Consider the following 144-residue polypeptide: Large-conductance mechanosensitive channel (144 aa).

Helical transmembrane passes span 16-36 (VIDL…VDSV) and 86-106 (GNFL…FMMV).

It belongs to the MscL family. As to quaternary structure, homopentamer.

The protein resides in the cell inner membrane. Channel that opens in response to stretch forces in the membrane lipid bilayer. May participate in the regulation of osmotic pressure changes within the cell. In Cupriavidus metallidurans (strain ATCC 43123 / DSM 2839 / NBRC 102507 / CH34) (Ralstonia metallidurans), this protein is Large-conductance mechanosensitive channel.